Here is an 853-residue protein sequence, read N- to C-terminus: Envelope glycoprotein gp160 (853 aa).

The signal sequence occupies residues 1-31 (MRVKEIRKNWQHLRGGILLLGMLMICSAAKE). The Extracellular portion of the chain corresponds to 32–681 (KTWVTIYYGV…ITNWLWYIRL (650 aa)). C53 and C73 form a disulfide bridge. N-linked (GlcNAc...) asparagine; by host glycans are attached at residues N87, N129, N134, N138, N157, N189, N199, N232, N236, N243, N264, N278, N291, N297, N303, N333, N340, N356, and N362. Intrachain disulfides connect C118/C207, C125/C198, C130/C158, C220/C249, and C230/C241. Residues 130–157 (CTNLNITKNTTNPTSSSWGMMEKGEIKN) are V1. The tract at residues 158-198 (CSFYITTSIRNKVKKEYALFNRLDVVPIENTNNTKYRLISC) is V2. Residues 298–331 (CTRPNNNTRRRLSIGPGRAFYARRNIIGDIRQAH) are V3. A disulfide bridge links C298 with C332. Residues 364 to 374 (SSGGDPEIVMH) form a CD4-binding loop region. Disulfide bonds link C378-C441 and C385-C414. The segment at 385-414 (CNTAQLFNSTWNVTGGTNGTEGNDIITLQC) is V4. N-linked (GlcNAc...) asparagine; by host glycans are attached at residues N392, N396, N402, N444, and N456. A V5 region spans residues 459–468 (ETETEIFRPG). The tract at residues 509-529 (AVGIGAVFLGFLGAAGSTMGA) is fusion peptide. Residues 571 to 589 (KQLQARVLALERYLRDQQL) are immunosuppression. C595 and C601 are oxidised to a cystine. N-linked (GlcNAc...) asparagine; by host glycosylation is found at N608, N613, N622, and N634. The stretch at 630-664 (REIDNYTDYIYDLLEKSQTQQEKNEKELLELDKWA) forms a coiled coil. The MPER; binding to GalCer stretch occupies residues 659–680 (ELDKWASLWNWFDITNWLWYIR). Residues 682–702 (FIMIVGGLIGLRIVFAVLSIV) traverse the membrane as a helical segment. At 703–853 (NRVRQGYSPL…IRQGLERALL (151 aa)) the chain is on the cytoplasmic side. Residues 709–712 (YSPL) carry the YXXL motif; contains endocytosis signal motif. The disordered stretch occupies residues 718–740 (LPASRGPDRPEGTEEEGGERDRD). Residues C761 and C834 are each lipidated (S-palmitoyl cysteine; by host). Positions 852–853 (LL) match the Di-leucine internalization motif motif.

The protein belongs to the HIV-1 env protein family. In terms of assembly, the mature envelope protein (Env) consists of a homotrimer of non-covalently associated gp120-gp41 heterodimers. The resulting complex protrudes from the virus surface as a spike. There seems to be as few as 10 spikes on the average virion. Interacts with host CD4, CCR5 and CXCR4. Gp120 also interacts with the C-type lectins CD209/DC-SIGN and CLEC4M/DC-SIGNR (collectively referred to as DC-SIGN(R)). Gp120 and gp41 interact with GalCer. Gp120 interacts with host ITGA4/ITGB7 complex; on CD4+ T-cells, this interaction results in rapid activation of integrin ITGAL/LFA-1, which facilitates efficient cell-to-cell spreading of HIV-1. Gp120 interacts with cell-associated heparan sulfate; this interaction increases virus infectivity on permissive cells and may be involved in infection of CD4- cells. The mature envelope protein (Env) consists of a homotrimer of non-covalently associated gp120-gp41 heterodimers. The resulting complex protrudes from the virus surface as a spike. There seems to be as few as 10 spikes on the average virion. In terms of processing, highly glycosylated by host. The high number of glycan on the protein is reffered to as 'glycan shield' because it contributes to hide protein sequence from adaptive immune system. Post-translationally, palmitoylation of the transmembrane protein and of Env polyprotein (prior to its proteolytic cleavage) is essential for their association with host cell membrane lipid rafts. Palmitoylation is therefore required for envelope trafficking to classical lipid rafts, but not for viral replication. Specific enzymatic cleavages in vivo yield mature proteins. Envelope glycoproteins are synthesized as an inactive precursor that is heavily N-glycosylated and processed likely by host cell furin in the Golgi to yield the mature SU and TM proteins. The cleavage site between SU and TM requires the minimal sequence [KR]-X-[KR]-R. About 2 of the 9 disulfide bonds of gp41 are reduced by P4HB/PDI, following binding to CD4 receptor.

The protein resides in the virion membrane. Its subcellular location is the host cell membrane. The protein localises to the host endosome membrane. Functionally, oligomerizes in the host endoplasmic reticulum into predominantly trimers. In a second time, gp160 transits in the host Golgi, where glycosylation is completed. The precursor is then proteolytically cleaved in the trans-Golgi and thereby activated by cellular furin or furin-like proteases to produce gp120 and gp41. Its function is as follows. Attaches the virus to the host lymphoid cell by binding to the primary receptor CD4. This interaction induces a structural rearrangement creating a high affinity binding site for a chemokine coreceptor like CXCR4 and/or CCR5. Acts as a ligand for CD209/DC-SIGN and CLEC4M/DC-SIGNR, which are respectively found on dendritic cells (DCs), and on endothelial cells of liver sinusoids and lymph node sinuses. These interactions allow capture of viral particles at mucosal surfaces by these cells and subsequent transmission to permissive cells. HIV subverts the migration properties of dendritic cells to gain access to CD4+ T-cells in lymph nodes. Virus transmission to permissive T-cells occurs either in trans (without DCs infection, through viral capture and transmission), or in cis (following DCs productive infection, through the usual CD4-gp120 interaction), thereby inducing a robust infection. In trans infection, bound virions remain infectious over days and it is proposed that they are not degraded, but protected in non-lysosomal acidic organelles within the DCs close to the cell membrane thus contributing to the viral infectious potential during DCs' migration from the periphery to the lymphoid tissues. On arrival at lymphoid tissues, intact virions recycle back to DCs' cell surface allowing virus transmission to CD4+ T-cells. In terms of biological role, acts as a class I viral fusion protein. Under the current model, the protein has at least 3 conformational states: pre-fusion native state, pre-hairpin intermediate state, and post-fusion hairpin state. During fusion of viral and target intracellular membranes, the coiled coil regions (heptad repeats) assume a trimer-of-hairpins structure, positioning the fusion peptide in close proximity to the C-terminal region of the ectodomain. The formation of this structure appears to drive apposition and subsequent fusion of viral and target cell membranes. Complete fusion occurs in host cell endosomes and is dynamin-dependent, however some lipid transfer might occur at the plasma membrane. The virus undergoes clathrin-dependent internalization long before endosomal fusion, thus minimizing the surface exposure of conserved viral epitopes during fusion and reducing the efficacy of inhibitors targeting these epitopes. Membranes fusion leads to delivery of the nucleocapsid into the cytoplasm. The polypeptide is Envelope glycoprotein gp160 (Human immunodeficiency virus type 1 group M subtype B (strain 89.6) (HIV-1)).